The following is a 148-amino-acid chain: uncharacterized protein (148 aa).

Transmembrane regions (helical) follow at residues 16 to 36 and 41 to 61; these read IVGA…SIIL and LSFS…AYIF.

To M.jannaschii MJ0696.

The protein resides in the cell membrane. This is an uncharacterized protein from Methanocaldococcus jannaschii (strain ATCC 43067 / DSM 2661 / JAL-1 / JCM 10045 / NBRC 100440) (Methanococcus jannaschii).